Here is a 706-residue protein sequence, read N- to C-terminus: Probable E3 ubiquitin ligase complex SCF subunit sconB (706 aa).

Positions 1–12 are enriched in basic and acidic residues; sequence MQSDDRSVREGS. Disordered stretches follow at residues 1-43 and 56-76; these read MQSD…LLQQ and TAEE…SFGA. Residues 34–43 are compositionally biased toward low complexity; it reads QQQQQQLLQQ. The F-box domain maps to 203–249; the sequence is IDFLTALPPEISFKILCYLDTTSLCKAAQVSSRWRALADDDVVWHRM. WD repeat units follow at residues 377–414, 417–456, 458–494, 496–537, 589–632, 635–672, and 675–706; these read GHTN…ELRT, GHQS…STYT, HRGG…TFLL, GHTD…RTFH, ATET…CLRT, GHLE…CERT, and GHSG…SFRN.

This sequence belongs to the WD repeat MET30/SCONB/SCON-2 family. Component of the SCF(sconB) E3 ubiquitin ligase complex.

It participates in protein modification; protein ubiquitination. Its function is as follows. Component of the SCF(sconB) E3 ubiquitin ligase complex involved in the regulation of sulfur metabolite repression, probably by mediating the inactivation or degradation of the metR transcription factor. The polypeptide is Probable E3 ubiquitin ligase complex SCF subunit sconB (sconB) (Aspergillus flavus (strain ATCC 200026 / FGSC A1120 / IAM 13836 / NRRL 3357 / JCM 12722 / SRRC 167)).